Consider the following 316-residue polypeptide: Ribosomal RNA small subunit methyltransferase H (316 aa).

Residues 35 to 37, Asp55, Phe84, Asp105, and Gln112 each bind S-adenosyl-L-methionine; that span reads AGH.

The protein belongs to the methyltransferase superfamily. RsmH family.

The protein localises to the cytoplasm. It carries out the reaction cytidine(1402) in 16S rRNA + S-adenosyl-L-methionine = N(4)-methylcytidine(1402) in 16S rRNA + S-adenosyl-L-homocysteine + H(+). In terms of biological role, specifically methylates the N4 position of cytidine in position 1402 (C1402) of 16S rRNA. The protein is Ribosomal RNA small subunit methyltransferase H of Streptococcus mutans serotype c (strain ATCC 700610 / UA159).